The chain runs to 317 residues: Beta-ketoacyl-[acyl-carrier-protein] synthase III (317 aa).

Catalysis depends on residues Cys-112 and His-244. The segment at 245–249 (QANLR) is ACP-binding. Asn-274 is a catalytic residue.

The protein belongs to the thiolase-like superfamily. FabH family. In terms of assembly, homodimer.

Its subcellular location is the cytoplasm. It carries out the reaction malonyl-[ACP] + acetyl-CoA + H(+) = 3-oxobutanoyl-[ACP] + CO2 + CoA. Its pathway is lipid metabolism; fatty acid biosynthesis. In terms of biological role, catalyzes the condensation reaction of fatty acid synthesis by the addition to an acyl acceptor of two carbons from malonyl-ACP. Catalyzes the first condensation reaction which initiates fatty acid synthesis and may therefore play a role in governing the total rate of fatty acid production. Possesses both acetoacetyl-ACP synthase and acetyl transacylase activities. Its substrate specificity determines the biosynthesis of branched-chain and/or straight-chain of fatty acids. The sequence is that of Beta-ketoacyl-[acyl-carrier-protein] synthase III from Aliivibrio fischeri (strain ATCC 700601 / ES114) (Vibrio fischeri).